The sequence spans 213 residues: ATP phosphoribosyltransferase (213 aa).

The protein belongs to the ATP phosphoribosyltransferase family. Short subfamily. Heteromultimer composed of HisG and HisZ subunits.

The protein localises to the cytoplasm. The enzyme catalyses 1-(5-phospho-beta-D-ribosyl)-ATP + diphosphate = 5-phospho-alpha-D-ribose 1-diphosphate + ATP. Its pathway is amino-acid biosynthesis; L-histidine biosynthesis; L-histidine from 5-phospho-alpha-D-ribose 1-diphosphate: step 1/9. Catalyzes the condensation of ATP and 5-phosphoribose 1-diphosphate to form N'-(5'-phosphoribosyl)-ATP (PR-ATP). Has a crucial role in the pathway because the rate of histidine biosynthesis seems to be controlled primarily by regulation of HisG enzymatic activity. This chain is ATP phosphoribosyltransferase, found in Listeria monocytogenes serotype 4b (strain F2365).